The following is a 212-amino-acid chain: ATP phosphoribosyltransferase (212 aa).

It belongs to the ATP phosphoribosyltransferase family. Short subfamily. In terms of assembly, heteromultimer composed of HisG and HisZ subunits.

It is found in the cytoplasm. The catalysed reaction is 1-(5-phospho-beta-D-ribosyl)-ATP + diphosphate = 5-phospho-alpha-D-ribose 1-diphosphate + ATP. It functions in the pathway amino-acid biosynthesis; L-histidine biosynthesis; L-histidine from 5-phospho-alpha-D-ribose 1-diphosphate: step 1/9. Catalyzes the condensation of ATP and 5-phosphoribose 1-diphosphate to form N'-(5'-phosphoribosyl)-ATP (PR-ATP). Has a crucial role in the pathway because the rate of histidine biosynthesis seems to be controlled primarily by regulation of HisG enzymatic activity. The protein is ATP phosphoribosyltransferase of Clostridium botulinum (strain Langeland / NCTC 10281 / Type F).